A 634-amino-acid chain; its full sequence is Chaperone protein HtpG (634 aa).

Positions 1 to 342 (MSVETQKETL…SNDLSLNVSR (342 aa)) are a; substrate-binding. A b region spans residues 343–559 (EILQKDPVID…EQDLGLQMRQ (217 aa)). The tract at residues 560–634 (ILEASGQKVP…LNKLLVELSA (75 aa)) is c.

This sequence belongs to the heat shock protein 90 family. Homodimer.

The protein resides in the cytoplasm. Functionally, molecular chaperone. Has ATPase activity. This Ectopseudomonas mendocina (strain ymp) (Pseudomonas mendocina) protein is Chaperone protein HtpG.